The primary structure comprises 481 residues: Delta(14)-sterol reductase ERG24B (481 aa).

A run of 8 helical transmembrane segments spans residues 11–31 (FGGPLGATGIVFGLPILMQVL), 80–100 (LFAYYFLSLMLYRIMPAQIVL), 125–145 (LTGCAIGTYIYGANFPVWTWI), 149–169 (YIQLLTTSTVLTYIISIWTYL), 244–264 (TYGFVSDSIVVIALIQAYYVL), 279–299 (ITSDGLGFMLTWGDIVWVPFL), 313–333 (HLGPIGVGAIGTVFCIGLYIF), and 427–447 (AAPWGMLFTYLYSAWFGFLLI).

This sequence belongs to the ERG4/ERG24 family.

Its subcellular location is the endoplasmic reticulum membrane. The enzyme catalyses 4,4-dimethyl-5alpha-cholesta-8,24-dien-3beta-ol + NADP(+) = 4,4-dimethyl-5alpha-cholesta-8,14,24-trien-3beta-ol + NADPH + H(+). It participates in steroid metabolism; ergosterol biosynthesis. Delta(14)-sterol reductase; part of the third module of ergosterol biosynthesis pathway that includes the late steps of the pathway. Catalyzes the reduction of the C14=C15 double bond within 4,4,24-trimethyl ergosta-8,14,24(28)-trienolto produce 4,4-dimethylfecosterol. The third module or late pathway involves the ergosterol synthesis itself through consecutive reactions that mainly occur in the endoplasmic reticulum (ER) membrane. Firstly, the squalene synthase ERG9 catalyzes the condensation of 2 farnesyl pyrophosphate moieties to form squalene, which is the precursor of all steroids. Squalene synthase is crucial for balancing the incorporation of farnesyl diphosphate (FPP) into sterol and nonsterol isoprene synthesis. Secondly, squalene is converted into lanosterol by the consecutive action of the squalene epoxidase ERG1 and the lanosterol synthase ERG7. Then, the delta(24)-sterol C-methyltransferase ERG6 methylates lanosterol at C-24 to produce eburicol. Eburicol is the substrate of the sterol 14-alpha demethylase encoded by CYP51A, CYP51B and CYP51C, to yield 4,4,24-trimethyl ergosta-8,14,24(28)-trienol. CYP51B encodes the enzyme primarily responsible for sterol 14-alpha-demethylation, and plays an essential role in ascospore formation. CYP51A encodes an additional sterol 14-alpha-demethylase, induced on ergosterol depletion and responsible for the intrinsic variation in azole sensitivity. The third CYP51 isoform, CYP51C, does not encode a sterol 14-alpha-demethylase, but is required for full virulence on host wheat ears. The C-14 reductase ERG24 then reduces the C14=C15 double bond which leads to 4,4-dimethylfecosterol. A sequence of further demethylations at C-4, involving the C-4 demethylation complex containing the C-4 methylsterol oxidases ERG25, the sterol-4-alpha-carboxylate 3-dehydrogenase ERG26 and the 3-keto-steroid reductase ERG27, leads to the production of fecosterol via 4-methylfecosterol. ERG28 has a role as a scaffold to help anchor ERG25, ERG26 and ERG27 to the endoplasmic reticulum. The C-8 sterol isomerase ERG2 then catalyzes the reaction which results in unsaturation at C-7 in the B ring of sterols and thus converts fecosterol to episterol. The sterol-C5-desaturases ERG3A and ERG3BB then catalyze the introduction of a C-5 double bond in the B ring to produce 5-dehydroepisterol. The C-22 sterol desaturases ERG5A and ERG5B further convert 5-dehydroepisterol into ergosta-5,7,22,24(28)-tetraen-3beta-ol by forming the C-22(23) double bond in the sterol side chain. Finally, ergosta-5,7,22,24(28)-tetraen-3beta-ol is substrate of the C-24(28) sterol reductase ERG4 to produce ergosterol. The polypeptide is Delta(14)-sterol reductase ERG24B (Gibberella zeae (strain ATCC MYA-4620 / CBS 123657 / FGSC 9075 / NRRL 31084 / PH-1) (Wheat head blight fungus)).